The following is a 284-amino-acid chain: UPF0276 protein PA3283 (284 aa).

The protein belongs to the UPF0276 family.

The protein is UPF0276 protein PA3283 of Pseudomonas aeruginosa (strain ATCC 15692 / DSM 22644 / CIP 104116 / JCM 14847 / LMG 12228 / 1C / PRS 101 / PAO1).